We begin with the raw amino-acid sequence, 245 residues long: 4-hydroxy-tetrahydrodipicolinate reductase (245 aa).

NAD(+) is bound by residues 7–12 (GAKGKV), 75–77 (GTT), and 102–105 (APNF). The Proton donor/acceptor role is filled by histidine 132. A (S)-2,3,4,5-tetrahydrodipicolinate-binding site is contributed by histidine 133. Catalysis depends on lysine 136, which acts as the Proton donor. 142 to 143 (GT) provides a ligand contact to (S)-2,3,4,5-tetrahydrodipicolinate.

This sequence belongs to the DapB family.

The protein localises to the cytoplasm. It carries out the reaction (S)-2,3,4,5-tetrahydrodipicolinate + NAD(+) + H2O = (2S,4S)-4-hydroxy-2,3,4,5-tetrahydrodipicolinate + NADH + H(+). The catalysed reaction is (S)-2,3,4,5-tetrahydrodipicolinate + NADP(+) + H2O = (2S,4S)-4-hydroxy-2,3,4,5-tetrahydrodipicolinate + NADPH + H(+). The protein operates within amino-acid biosynthesis; L-lysine biosynthesis via DAP pathway; (S)-tetrahydrodipicolinate from L-aspartate: step 4/4. Functionally, catalyzes the conversion of 4-hydroxy-tetrahydrodipicolinate (HTPA) to tetrahydrodipicolinate. This is 4-hydroxy-tetrahydrodipicolinate reductase from Mycobacterium bovis (strain BCG / Pasteur 1173P2).